A 227-amino-acid chain; its full sequence is Orotidine 5'-phosphate decarboxylase (227 aa).

Substrate contacts are provided by residues aspartate 8, lysine 30, 57–66, threonine 116, arginine 177, glutamine 186, glycine 206, and arginine 207; that span reads DLKFHDIPNT. Residue lysine 59 is the Proton donor of the active site.

The protein belongs to the OMP decarboxylase family. Type 1 subfamily. In terms of assembly, homodimer.

The catalysed reaction is orotidine 5'-phosphate + H(+) = UMP + CO2. The protein operates within pyrimidine metabolism; UMP biosynthesis via de novo pathway; UMP from orotate: step 2/2. Functionally, catalyzes the decarboxylation of orotidine 5'-monophosphate (OMP) to uridine 5'-monophosphate (UMP). The protein is Orotidine 5'-phosphate decarboxylase of Acinetobacter baumannii (strain AB307-0294).